The sequence spans 499 residues: Cryptochrome-1 (499 aa).

Residues Arg-190, Ser-218, Ser-220, Gln-261, His-328, 360–362 (DAD), Cys-366, and Asn-369 each bind FAD.

The protein belongs to the DNA photolyase class-1 family. As to quaternary structure, interacts with tim and per; promoted by light conditions. The cofactor is FAD.

The protein resides in the cytoplasm. Its subcellular location is the perinuclear region. It localises to the nucleus. Its function is as follows. Blue light-dependent regulator that is the input of the circadian feedback loop. Has no photolyase activity for cyclobutane pyrimidine dimers or 6-4 photoproducts. Regulation of expression by light suggests a role in photoreception for locomotor activity rhythms. Functions, together with per, as a transcriptional repressor required for the oscillation of peripheral circadian clocks and for the correct specification of clock cells. Genes directly activated by the transcription factors Clock (Clk) and cycle (cyc) are repressed by cry. This chain is Cryptochrome-1, found in Culex quinquefasciatus (Southern house mosquito).